A 424-amino-acid polypeptide reads, in one-letter code: Serpin-Z2A (424 aa).

Residues 370–394 are RCL; it reads GTEAAASTACTIRLLSMSYPEDFVA.

Belongs to the serpin family.

Its function is as follows. Probable serine protease inhibitor. The protein is Serpin-Z2A of Oryza sativa subsp. japonica (Rice).